We begin with the raw amino-acid sequence, 383 residues long: MSCRKFNAPRHGSLQFCPRKRSKTIRPAAGAFPADDRSQPVHLTGFMAYKAGMTHVVRTKTQVAKNKQLSREIMDAVTVLEAPPMVVYGIVGYEKTVTGLRRLPIVTAAYVSDGVLRRMFGNRYASKESAGQFCKGSVCESRVEMIKERAHCVRVLVQTQPTLIKGLGLKKAHIAEIQVNGGSISEKVEWALGRLEKEIAIGEVFGVNENIDTIGVTKGKGFQGTVKRFGVRKQPRKSRKGIRKVACIGAWHPSRVMYSIARAGQMGFHRRTEKNKRVYMIGNGSSNIKTEFDLTEKPISPMGGFPHYGEVRNDFIMVKGAVVGARKRVVTLRKSLLRQRAGEELVIKFVDTSSKIGHGRFQTSAEKKAFYGARKADIAAEIH.

Belongs to the universal ribosomal protein uL3 family.

It localises to the cytoplasm. The sequence is that of Large ribosomal subunit protein uL3 (RPL3-1) from Encephalitozoon cuniculi (strain GB-M1) (Microsporidian parasite).